Reading from the N-terminus, the 235-residue chain is Putative N-acetylmannosamine-6-phosphate 2-epimerase (235 aa).

It belongs to the NanE family.

It carries out the reaction an N-acyl-D-glucosamine 6-phosphate = an N-acyl-D-mannosamine 6-phosphate. It participates in amino-sugar metabolism; N-acetylneuraminate degradation; D-fructose 6-phosphate from N-acetylneuraminate: step 3/5. Its function is as follows. Converts N-acetylmannosamine-6-phosphate (ManNAc-6-P) to N-acetylglucosamine-6-phosphate (GlcNAc-6-P). In Enterobacter sp. (strain 638), this protein is Putative N-acetylmannosamine-6-phosphate 2-epimerase.